A 669-amino-acid chain; its full sequence is DNA ligase (669 aa).

Residues 34-38, 83-84, and Glu114 contribute to the NAD(+) site; these read DAEYD and SL. The N6-AMP-lysine intermediate role is filled by Lys116. Positions 137, 171, 287, and 311 each coordinate NAD(+). Cys405, Cys408, Cys423, and Cys428 together coordinate Zn(2+). Residues 591–669 form the BRCT domain; that stretch reads NVESYFAGKT…EERFLQELNK (79 aa).

Belongs to the NAD-dependent DNA ligase family. LigA subfamily. The cofactor is Mg(2+). It depends on Mn(2+) as a cofactor.

It catalyses the reaction NAD(+) + (deoxyribonucleotide)n-3'-hydroxyl + 5'-phospho-(deoxyribonucleotide)m = (deoxyribonucleotide)n+m + AMP + beta-nicotinamide D-nucleotide.. In terms of biological role, DNA ligase that catalyzes the formation of phosphodiester linkages between 5'-phosphoryl and 3'-hydroxyl groups in double-stranded DNA using NAD as a coenzyme and as the energy source for the reaction. It is essential for DNA replication and repair of damaged DNA. This chain is DNA ligase, found in Bacillus cereus (strain 03BB102).